The following is a 307-amino-acid chain: N-acetylmuramic acid 6-phosphate etherase (307 aa).

The region spanning 60-223 (AAQAIARGGR…STGAMVRIGK (164 aa)) is the SIS domain. The active-site Proton donor is the Glu88. Glu119 is an active-site residue.

The protein belongs to the GCKR-like family. MurNAc-6-P etherase subfamily. In terms of assembly, homodimer.

It catalyses the reaction N-acetyl-D-muramate 6-phosphate + H2O = N-acetyl-D-glucosamine 6-phosphate + (R)-lactate. The protein operates within amino-sugar metabolism; N-acetylmuramate degradation. Its function is as follows. Specifically catalyzes the cleavage of the D-lactyl ether substituent of MurNAc 6-phosphate, producing GlcNAc 6-phosphate and D-lactate. The polypeptide is N-acetylmuramic acid 6-phosphate etherase (Synechococcus elongatus (strain ATCC 33912 / PCC 7942 / FACHB-805) (Anacystis nidulans R2)).